Here is a 126-residue protein sequence, read N- to C-terminus: Small ribosomal subunit protein eS24 (126 aa).

The interval 98-126 (LYTKPQTSRKQRKEKKNRLKKAGKKTAKK) is disordered. Residues 104 to 126 (TSRKQRKEKKNRLKKAGKKTAKK) are compositionally biased toward basic residues.

The protein belongs to the eukaryotic ribosomal protein eS24 family.

This Dictyostelium discoideum (Social amoeba) protein is Small ribosomal subunit protein eS24 (rps24).